A 210-amino-acid chain; its full sequence is MSEAIFNLDASVRTDLGKGASRRLRREDKLPGIIYGGEEAPVSITLDHNKVNNSADFEAFYSHVLTLNLDGKPVEVLVKDMQRHPYKPKIMHIDFQRVIAGEDVHTNVPLHFVNEEKSAAVKAGGIAEHHVTEIEVTCQPKDLPEFIEVDMAAVEMGQTVHLSDLTLPAGVSSVELAKNDEAHDLAVVTVKPAPKAAETDEDGEEAASEE.

The tract at residues 191-210 is disordered; sequence KPAPKAAETDEDGEEAASEE. Acidic residues predominate over residues 199-210; it reads TDEDGEEAASEE.

The protein belongs to the bacterial ribosomal protein bL25 family. CTC subfamily. Part of the 50S ribosomal subunit; part of the 5S rRNA/L5/L18/L25 subcomplex. Contacts the 5S rRNA. Binds to the 5S rRNA independently of L5 and L18.

This is one of the proteins that binds to the 5S RNA in the ribosome where it forms part of the central protuberance. The protein is Large ribosomal subunit protein bL25 of Alteromonas mediterranea (strain DSM 17117 / CIP 110805 / LMG 28347 / Deep ecotype).